Consider the following 627-residue polypeptide: uncharacterized protein (627 aa).

2 disordered regions span residues 141-187 and 490-510; these read LRYP…TPPS and ENENTNGSANNSTYTNGGPRT. Over residues 491-510 the composition is skewed to polar residues; it reads NENTNGSANNSTYTNGGPRT. Serine 559 carries the phosphoserine modification.

This is an uncharacterized protein from Saccharomyces cerevisiae (strain ATCC 204508 / S288c) (Baker's yeast).